A 220-amino-acid polypeptide reads, in one-letter code: Thiamine-phosphate synthase (220 aa).

4-amino-2-methyl-5-(diphosphooxymethyl)pyrimidine contacts are provided by residues Q38–K42 and N70. Residues D71 and D90 each contribute to the Mg(2+) site. Residue T109 participates in 4-amino-2-methyl-5-(diphosphooxymethyl)pyrimidine binding. 2-[(2R,5Z)-2-carboxy-4-methylthiazol-5(2H)-ylidene]ethyl phosphate is bound at residue T135–S137. Position 138 (K138) interacts with 4-amino-2-methyl-5-(diphosphooxymethyl)pyrimidine. Residues G171 and I191–S192 contribute to the 2-[(2R,5Z)-2-carboxy-4-methylthiazol-5(2H)-ylidene]ethyl phosphate site.

Belongs to the thiamine-phosphate synthase family. Requires Mg(2+) as cofactor.

It catalyses the reaction 2-[(2R,5Z)-2-carboxy-4-methylthiazol-5(2H)-ylidene]ethyl phosphate + 4-amino-2-methyl-5-(diphosphooxymethyl)pyrimidine + 2 H(+) = thiamine phosphate + CO2 + diphosphate. The catalysed reaction is 2-(2-carboxy-4-methylthiazol-5-yl)ethyl phosphate + 4-amino-2-methyl-5-(diphosphooxymethyl)pyrimidine + 2 H(+) = thiamine phosphate + CO2 + diphosphate. The enzyme catalyses 4-methyl-5-(2-phosphooxyethyl)-thiazole + 4-amino-2-methyl-5-(diphosphooxymethyl)pyrimidine + H(+) = thiamine phosphate + diphosphate. It functions in the pathway cofactor biosynthesis; thiamine diphosphate biosynthesis; thiamine phosphate from 4-amino-2-methyl-5-diphosphomethylpyrimidine and 4-methyl-5-(2-phosphoethyl)-thiazole: step 1/1. Functionally, condenses 4-methyl-5-(beta-hydroxyethyl)thiazole monophosphate (THZ-P) and 2-methyl-4-amino-5-hydroxymethyl pyrimidine pyrophosphate (HMP-PP) to form thiamine monophosphate (TMP). This chain is Thiamine-phosphate synthase, found in Agrobacterium fabrum (strain C58 / ATCC 33970) (Agrobacterium tumefaciens (strain C58)).